The primary structure comprises 98 residues: NADH-ubiquinone oxidoreductase chain 4L (98 aa).

3 helical membrane-spanning segments follow: residues M1–T21, S29–L49, and I58–L78.

Belongs to the complex I subunit 4L family. Core subunit of respiratory chain NADH dehydrogenase (Complex I) which is composed of 45 different subunits.

It is found in the mitochondrion inner membrane. It carries out the reaction a ubiquinone + NADH + 5 H(+)(in) = a ubiquinol + NAD(+) + 4 H(+)(out). In terms of biological role, core subunit of the mitochondrial membrane respiratory chain NADH dehydrogenase (Complex I) which catalyzes electron transfer from NADH through the respiratory chain, using ubiquinone as an electron acceptor. Part of the enzyme membrane arm which is embedded in the lipid bilayer and involved in proton translocation. The sequence is that of NADH-ubiquinone oxidoreductase chain 4L (MT-ND4L) from Presbytis melalophos (Mitred leaf monkey).